Here is a 544-residue protein sequence, read N- to C-terminus: Homeobox protein B-H1 (544 aa).

Low complexity predominate over residues 53–70 (STTTMSSGGSTTTASGIG). Disordered regions lie at residues 53–73 (STTT…GKPN), 92–179 (YKQQ…PPTA), 236–308 (GGVG…AFTD), and 471–544 (AANP…QIQV). Over residues 95 to 105 (QQHHQQLHHHN) the composition is skewed to basic residues. Low complexity predominate over residues 106–131 (NNNNSGSSGGSSPAHSNNNNNINGDN). Residues 156–172 (THPHTHPHALMHPHGKL) are compositionally biased toward basic residues. Residues 247–262 (DLDDSSDYHEENEDCD) show a composition bias toward acidic residues. Over residues 266–282 (MDDHSVCSNGGKDDDGN) the composition is skewed to basic and acidic residues. The span at 283–293 (SVKSGSTSDMS) shows a compositional bias: polar residues. Positions 299–358 (QRKARTAFTDHQLQTLEKSFERQKYLSVQERQELAHKLDLSDCQVKTWYQNRRTKWKRQT) form a DNA-binding region, homeobox. A compositionally biased stretch (pro residues) spans 476–485 (GPHPVAPPPS). Positions 492–506 (PSGLVKPIPAHSASA) are enriched in low complexity. The span at 507–516 (SPPPRPPSTP) shows a compositional bias: pro residues.

This sequence belongs to the Antp homeobox family. In terms of tissue distribution, B-H1 and B-H2 are abundant in the eye-antenna imaginal disk. Expressed in R1 and R6 cells throughout larval stage until 30 hours after puparium formation, at which time expression is seen in the anterior and posterior primary pigment cells. Coexpressed in embryonic glial cells, neurons of the CNS and PNS, most latitudinal anterior cells of the developing notum and the central circular region of the leg and antennal imaginal disk throughout larval development.

It localises to the nucleus. Functionally, B-H1 and B-H2 are regulated by members of the wg signaling pathway; wg and dpp. B-H1 and B-H2 are coexpressed and functionally required in R1 and R6 receptor cells and primary pigment cells for normal eye development. Coexpression is also required for the fate determination of external sensory organs, formation of notal microchaetae, formation of presutural macrochaetae, antennal development and for distal leg morphogenesis; segmentation and specification of tarsal segments 3-5. This Drosophila melanogaster (Fruit fly) protein is Homeobox protein B-H1 (B-H1).